Reading from the N-terminus, the 236-residue chain is Peroxisomal membrane protein 11D (236 aa).

An N-acetylglycine modification is found at G2. Residues G2 to K92 lie on the Cytoplasmic side of the membrane. Residues N93–G109 form a helical membrane-spanning segment. The Lumenal portion of the chain corresponds to R110–T207. A helical membrane pass occupies residues P208 to L227. Residues P228–P236 are Cytoplasmic-facing.

It belongs to the peroxin-11 family. As to quaternary structure, homooligomer. Interacts with ARC5 and FIS1B on peroxisomes. Expressed in developing siliques.

It localises to the peroxisome membrane. Functionally, involved in peroxisomal proliferation. Promotes peroxisomal duplication, aggregation or elongation without fission. This is Peroxisomal membrane protein 11D (PEX11D) from Arabidopsis thaliana (Mouse-ear cress).